The chain runs to 336 residues: tRNA N6-adenosine threonylcarbamoyltransferase (336 aa).

2 residues coordinate Fe cation: His-110 and His-114. Substrate contacts are provided by residues 133–137, Asp-166, Gly-179, and Asn-271; that span reads LVSGK. Asp-300 contributes to the Fe cation binding site.

This sequence belongs to the KAE1 / TsaD family. Fe(2+) is required as a cofactor.

Its subcellular location is the cytoplasm. It carries out the reaction L-threonylcarbamoyladenylate + adenosine(37) in tRNA = N(6)-L-threonylcarbamoyladenosine(37) in tRNA + AMP + H(+). Functionally, required for the formation of a threonylcarbamoyl group on adenosine at position 37 (t(6)A37) in tRNAs that read codons beginning with adenine. Is involved in the transfer of the threonylcarbamoyl moiety of threonylcarbamoyl-AMP (TC-AMP) to the N6 group of A37, together with TsaE and TsaB. TsaD likely plays a direct catalytic role in this reaction. The sequence is that of tRNA N6-adenosine threonylcarbamoyltransferase from Buchnera aphidicola subsp. Acyrthosiphon pisum (strain 5A).